The sequence spans 323 residues: Rhazimal reductase 2 (323 aa).

An NADP(+)-binding site is contributed by Asp53. Catalysis depends on Tyr58, which acts as the Proton donor. NADP(+)-binding positions include 167-168 (SN), Gln189, 215-220 (WSPLLS), and 289-297 (DQIQQIPQR).

This sequence belongs to the aldo/keto reductase family. As to quaternary structure, monomer.

It carries out the reaction rhazimol + NADP(+) = rhazimal + NADPH + 2 H(+). It participates in alkaloid biosynthesis. Functionally, oxidoreductase involved in the biosynthesis of akuammilan monoterpene indole alkaloids (MIAs) natural products, components with various biological properties such as antidiabetic, antibacterial, anti-inflammatory, anticancer, and antimalarial activities. Catalyzes the conversion of rhazimal to rhazimol. The sequence is that of Rhazimal reductase 2 from Alstonia scholaris (Dogbane).